The chain runs to 156 residues: Small ribosomal subunit protein uS7 (156 aa).

The protein belongs to the universal ribosomal protein uS7 family. Part of the 30S ribosomal subunit. Contacts proteins S9 and S11.

In terms of biological role, one of the primary rRNA binding proteins, it binds directly to 16S rRNA where it nucleates assembly of the head domain of the 30S subunit. Is located at the subunit interface close to the decoding center, probably blocks exit of the E-site tRNA. In Methylorubrum extorquens (strain CM4 / NCIMB 13688) (Methylobacterium extorquens), this protein is Small ribosomal subunit protein uS7.